The primary structure comprises 261 residues: Pyridoxine-5'-phosphate oxidase (261 aa).

Pyridoxal 5'-phosphate is bound at residue 42-45 (RGDR). 95-98 (RMLL) is a binding site for FMN. Residue Lys100 participates in pyridoxal 5'-phosphate binding. FMN is bound by residues 110–111 (FT), 116–117 (RK), and Gln139. Pyridoxal 5'-phosphate-binding residues include Tyr157, Arg161, and Ser165. Residues 174–175 (QS) and Trp219 each bind FMN. 225–227 (RLH) is a binding site for pyridoxal 5'-phosphate. Arg229 serves as a coordination point for FMN. Thr238 carries the phosphothreonine modification. Ser241 bears the Phosphoserine mark.

Belongs to the pyridoxamine 5'-phosphate oxidase family. Homodimer. The cofactor is FMN. Detected in adult liver.

It carries out the reaction pyridoxamine 5'-phosphate + O2 + H2O = pyridoxal 5'-phosphate + H2O2 + NH4(+). It catalyses the reaction pyridoxine 5'-phosphate + O2 = pyridoxal 5'-phosphate + H2O2. The protein operates within cofactor metabolism; pyridoxal 5'-phosphate salvage; pyridoxal 5'-phosphate from pyridoxamine 5'-phosphate: step 1/1. It functions in the pathway cofactor metabolism; pyridoxal 5'-phosphate salvage; pyridoxal 5'-phosphate from pyridoxine 5'-phosphate: step 1/1. In terms of biological role, catalyzes the oxidation of either pyridoxine 5'-phosphate (PNP) or pyridoxamine 5'-phosphate (PMP) into pyridoxal 5'-phosphate (PLP). In Rattus norvegicus (Rat), this protein is Pyridoxine-5'-phosphate oxidase (Pnpo).